A 480-amino-acid polypeptide reads, in one-letter code: Dimethyl-sulfide monooxygenase (480 aa).

FMN-binding residues include Asp58, Thr104, His154, Tyr158, and Ser230. Residues Gln423–Glu480 are disordered.

The protein belongs to the NtaA/SnaA/DszA monooxygenase family. Heterodimer of 2 subunits, DmoA and DmoB. It depends on FMN as a cofactor.

The catalysed reaction is dimethyl sulfide + NADH + O2 + H(+) = methanethiol + formaldehyde + NAD(+) + H2O. Its activity is regulated as follows. Inhibited by umbelliferone, 8-anilinonaphthalenesulfonate, a range of metal-chelating agents, and Hg(2+), Cd(2+) and Pb(2+) ions. In terms of biological role, monooxygenase that mediates oxidation of dimethyl sulfide, the first step in dimethyl sulfide degradation pathway. Has much lower activity with diethyl sulfide and other short-chain alkyl methyl sulfides. The sequence is that of Dimethyl-sulfide monooxygenase (dmoA) from Hyphomicrobium sulfonivorans.